Consider the following 142-residue polypeptide: Large ribosomal subunit protein uL13 (142 aa).

It belongs to the universal ribosomal protein uL13 family. Part of the 50S ribosomal subunit.

This protein is one of the early assembly proteins of the 50S ribosomal subunit, although it is not seen to bind rRNA by itself. It is important during the early stages of 50S assembly. The chain is Large ribosomal subunit protein uL13 from Baumannia cicadellinicola subsp. Homalodisca coagulata.